Here is a 39-residue protein sequence, read N- to C-terminus: SGSKTAKIGDGCFGLPLDRIGSTSGMGCGSVPKPTPGGS.

Positions 1–8 (SGSKTAKI) are excised as a propeptide. Residues Cys-12 and Cys-28 are joined by a disulfide bond. The interval 19–39 (RIGSTSGMGCGSVPKPTPGGS) is disordered.

It belongs to the natriuretic peptide family. As to expression, expressed by the venom gland.

The protein localises to the secreted. In terms of biological role, snake venom natriuretic peptide that targets both NPR1 and NPR2. Exhibits hypotensive and vasodepressor activities. This is Natriuretic peptide NsNP-b from Notechis scutatus scutatus (Mainland tiger snake).